Here is a 343-residue protein sequence, read N- to C-terminus: L-threonine 3-dehydrogenase (343 aa).

Cys40 provides a ligand contact to Zn(2+). Catalysis depends on charge relay system residues Thr42 and His45. The Zn(2+) site is built by His65, Glu66, Cys95, Cys98, Cys101, and Cys109. NAD(+) is bound by residues Ile177, Asp197, Arg202, 264 to 266 (LGI), and 288 to 289 (IY).

It belongs to the zinc-containing alcohol dehydrogenase family. Homotetramer. It depends on Zn(2+) as a cofactor.

Its subcellular location is the cytoplasm. The enzyme catalyses L-threonine + NAD(+) = (2S)-2-amino-3-oxobutanoate + NADH + H(+). It functions in the pathway amino-acid degradation; L-threonine degradation via oxydo-reductase pathway; glycine from L-threonine: step 1/2. Catalyzes the NAD(+)-dependent oxidation of L-threonine to 2-amino-3-ketobutyrate. In Vibrio atlanticus (strain LGP32) (Vibrio splendidus (strain Mel32)), this protein is L-threonine 3-dehydrogenase.